The primary structure comprises 586 residues: Aspartate--tRNA(Asp/Asn) ligase (586 aa).

An L-aspartate-binding site is contributed by Glu175. Positions 199–202 (QIFK) are aspartate. Arg221 contributes to the L-aspartate binding site. ATP is bound by residues 221 to 223 (RDE) and Gln230. His448 provides a ligand contact to L-aspartate. Position 482 (Glu482) interacts with ATP. Arg489 serves as a coordination point for L-aspartate. Residue 534-537 (GVDR) participates in ATP binding.

Belongs to the class-II aminoacyl-tRNA synthetase family. Type 1 subfamily. Homodimer.

The protein resides in the cytoplasm. The enzyme catalyses tRNA(Asx) + L-aspartate + ATP = L-aspartyl-tRNA(Asx) + AMP + diphosphate. Aspartyl-tRNA synthetase with relaxed tRNA specificity since it is able to aspartylate not only its cognate tRNA(Asp) but also tRNA(Asn). Reaction proceeds in two steps: L-aspartate is first activated by ATP to form Asp-AMP and then transferred to the acceptor end of tRNA(Asp/Asn). This chain is Aspartate--tRNA(Asp/Asn) ligase, found in Syntrophomonas wolfei subsp. wolfei (strain DSM 2245B / Goettingen).